We begin with the raw amino-acid sequence, 521 residues long: Maturase K (521 aa).

It belongs to the intron maturase 2 family. MatK subfamily.

Its subcellular location is the plastid. The protein resides in the chloroplast. Functionally, usually encoded in the trnK tRNA gene intron. Probably assists in splicing its own and other chloroplast group II introns. This is Maturase K from Anthericum liliago (St-Bernard's lily).